The primary structure comprises 440 residues: Homocitrate synthase, mitochondrial (440 aa).

Polar residues predominate over residues 1–23; that stretch reads MSENNEFQSVTESTTAPTTSNPY. Residues 1 to 27 are disordered; sequence MSENNEFQSVTESTTAPTTSNPYGPNP. The Pyruvate carboxyltransferase domain maps to 37–290; that stretch reads FQLIDSTLRE…RSKYKLHKIR (254 aa). Residue R45 coordinates 2-oxoglutarate. E46 is a Mg(2+) binding site. 2-oxoglutarate-binding residues include H105, R165, and T199. Mg(2+) is bound by residues H226 and H228. H323 (proton acceptor) is an active-site residue. The residue at position 399 (S399) is a Phosphoserine. T410 bears the Phosphothreonine mark.

The protein belongs to the alpha-IPM synthase/homocitrate synthase family. Homocitrate synthase LYS20/LYS21 subfamily. Requires Mg(2+) as cofactor. Mn(2+) is required as a cofactor.

The protein resides in the mitochondrion. The enzyme catalyses acetyl-CoA + 2-oxoglutarate + H2O = (2R)-homocitrate + CoA + H(+). Its pathway is amino-acid biosynthesis; L-lysine biosynthesis via AAA pathway; L-alpha-aminoadipate from 2-oxoglutarate: step 1/5. Functionally, catalyzes the aldol-type condensation of 2-oxoglutarate with acetyl-CoA to yield homocitrate. Carries out the first step of the alpha-aminoadipate (AAA) lysine biosynthesis pathway. This is Homocitrate synthase, mitochondrial (LYS21) from Saccharomyces cerevisiae (strain ATCC 204508 / S288c) (Baker's yeast).